The following is a 650-amino-acid chain: Laccase-like multicopper oxidase 1 (650 aa).

The first 20 residues, 1–20 (MLLSKLSILLAKWLSVAVYA), serve as a signal peptide directing secretion. Plastocyanin-like domains are found at residues 41 to 151 (QVPS…IVED), 162 to 360 (ERIL…LRYN), and 439 to 595 (KPVL…VVGD). Cys-46 and Cys-254 are joined by a disulfide. N-linked (GlcNAc...) asparagine glycans are attached at residues Asn-55 and Asn-83. Residues His-87, His-89, His-133, and His-135 each coordinate Cu cation. Positions 501, 504, 506, 576, 577, 578, and 582 each coordinate Cu cation. N-linked (GlcNAc...) asparagine glycosylation is present at Asn-620.

It belongs to the multicopper oxidase family. As to quaternary structure, monomer. N-glycosylation Asn-55 and Asn-83 is involved in folding, conformational stability and laccase activity.

It catalyses the reaction 2 2',3,4-trihydroxy-trans-chalcone + O2 + 2 H(+) = 2 3',4'-dihydroxyaurone + 2 H2O. Retains almost half of its activity in presence of high salt concentrations up to 100 mM NaCl. Retains also more than 85% of its original activity in the presence of 1 mM EDTA, indicating a satisfactory resistance towards chelators, which is rare among metal-containing enzyme. The activity drops significantly in the presence of NaN(3) or SDS. Appears more active in the presence of methanol compared to ethanol, but acetone or DMSO addition severely affect remaining laccase activity. Yellow laccase-like multicopper oxidase that is able to oxidize a variety of phenolic compounds including standard laccase substrates such as 2'-azino-bis(3-ethylbenzothiazoline-6-sulphonic acid) (ABTS) and 2,6-dimethoxyphenol (2,6-DMP). The existence of an ortho-hydroxy group is crucial for oxidation since pyrogallol and catechol, which contain ortho-hydroxy groups, are readily oxidized, which is not the case for resorcinol and hydroquinone, that contain meta- and para-hydroxy groups, respectively. The same is also true for the existence of a methoxy group in an ortho-position, since 2,6-DMP, guaiacol and ferulic and caffeic acids are also rather easily oxidized compared with the corresponding unsubstituted compound. Can be used for the bioconversion of 2',3,4-trihy-droxychalcone to 3',4'-dihydroxy-aurone, a bioactive aurone recently shown to possess inhibitory activity against several isoforms of the histone deacetylase complex (HDAC). The polypeptide is Laccase-like multicopper oxidase 1 (Thermothelomyces thermophilus (strain ATCC 42464 / BCRC 31852 / DSM 1799) (Sporotrichum thermophile)).